Here is a 110-residue protein sequence, read N- to C-terminus: Protein RnfH (110 aa).

Residues 86 to 110 form a disordered region; that stretch reads RKRAAQQAKDQEEKKKAEKSANKEN. Basic and acidic residues predominate over residues 94 to 110; it reads KDQEEKKKAEKSANKEN.

It belongs to the UPF0125 (RnfH) family.

The chain is Protein RnfH from Mannheimia succiniciproducens (strain KCTC 0769BP / MBEL55E).